Consider the following 373-residue polypeptide: Chaperone protein DnaJ (373 aa).

The 65-residue stretch at 4 to 68 (NYYQILGVSK…QTRAAYDRLG (65 aa)) folds into the J domain. The CR-type zinc finger occupies 136–214 (GIEKNISFSS…CHGMGRYHKQ (79 aa)). Positions 149, 152, 166, 169, 188, 191, 202, and 205 each coordinate Zn(2+). CXXCXGXG motif repeat units follow at residues 149–156 (CDTCHGSG), 166–173 (CDACSGVG), 188–195 (CHKCQGNG), and 202–209 (CKKCHGMG).

Belongs to the DnaJ family. In terms of assembly, homodimer. Requires Zn(2+) as cofactor.

The protein localises to the cytoplasm. Participates actively in the response to hyperosmotic and heat shock by preventing the aggregation of stress-denatured proteins and by disaggregating proteins, also in an autonomous, DnaK-independent fashion. Unfolded proteins bind initially to DnaJ; upon interaction with the DnaJ-bound protein, DnaK hydrolyzes its bound ATP, resulting in the formation of a stable complex. GrpE releases ADP from DnaK; ATP binding to DnaK triggers the release of the substrate protein, thus completing the reaction cycle. Several rounds of ATP-dependent interactions between DnaJ, DnaK and GrpE are required for fully efficient folding. Also involved, together with DnaK and GrpE, in the DNA replication of plasmids through activation of initiation proteins. The sequence is that of Chaperone protein DnaJ from Rickettsia peacockii (strain Rustic).